The sequence spans 141 residues: Hemoglobin subunit alpha-A (141 aa).

One can recognise a Globin domain in the interval 1–141 (VLSASDKSNV…VGTVLTAKYR (141 aa)). Residue H58 participates in O2 binding. Residue H87 coordinates heme b.

It belongs to the globin family. Heterotetramer of two alpha chains and two beta chains. In terms of tissue distribution, red blood cells.

Its function is as follows. Involved in oxygen transport from the lung to the various peripheral tissues. The sequence is that of Hemoglobin subunit alpha-A (HBAA) from Streptopelia orientalis (Eastern turtle dove).